The following is a 506-amino-acid chain: MSTSATNGTHYEQLHQGRTKMYKSKVDVVLGAQWGDEGKGKVVDMLASDVDIVCRCQGGNNAGHTVVANGTEFDFHLLPSGVVNEKCVSVIGNGVVIHLPSLFDEVLKNEAKGLQHLENRLIISDRAHLVFDFHQHVDGMQEAEKGGKSLGNGVVIHLPSLFDEVLKNEAKGLQHLENRLIISDRAHLVFDFHQHVDGMQEAEKGGKSLGTTKKGIGPAYSSKATRNGIRVGELLGDFNLFSEKFKSIVATHVRLFPSINVDVEAELARYKDYADKVRPYVKDTICFLHTALRNGKTILVEGANAAMLDIDFGTYPYVTSSNCSIGGVLTGLGLPPQTIGEVIGVVKAYTTRVGDGPFPTEQLNDIGDLLQTRGFEIGVTTKRKRRCGWLDIPLLKYTSLVNGYTCICVTKLDILDTLPEIKVAVAYKKPNGEKLDHFPGTIAELGSIEVEYAVLPGWQTSTEDVRNFKELPENAQSYVRFLESELSVPVRWVGVGKGRESIINVH.

GTP is bound by residues 35 to 41 (GDEGKGK) and 63 to 65 (GHT). Residue Asp36 is the Proton acceptor of the active site. Positions 36 and 63 each coordinate Mg(2+). Residues 36 to 39 (DEGK), 61 to 64 (NAGH), Thr212, Arg226, Asn304, Thr319, and Arg383 contribute to the IMP site. The active-site Proton donor is His64. 379–385 (VTTKRKR) provides a ligand contact to substrate. GTP-binding positions include Arg385, 411 to 413 (KLD), and 494 to 496 (GVG).

The protein belongs to the adenylosuccinate synthetase family. In terms of assembly, homodimer. The cofactor is Mg(2+).

Its subcellular location is the cytoplasm. It catalyses the reaction IMP + L-aspartate + GTP = N(6)-(1,2-dicarboxyethyl)-AMP + GDP + phosphate + 2 H(+). It participates in purine metabolism; AMP biosynthesis via de novo pathway; AMP from IMP: step 1/2. In terms of biological role, plays an important role in the de novo pathway and in the salvage pathway of purine nucleotide biosynthesis. Catalyzes the first committed step in the biosynthesis of AMP from IMP. The polypeptide is Adenylosuccinate synthetase (Drosophila yakuba (Fruit fly)).